The primary structure comprises 175 residues: Shikimate kinase (175 aa).

11–16 contributes to the ATP binding site; sequence GAGKTT. Thr15 serves as a coordination point for Mg(2+). The substrate site is built by Asp33, Arg57, and Gly79. Arg118 lines the ATP pocket. Residue Arg140 coordinates substrate.

The protein belongs to the shikimate kinase family. As to quaternary structure, monomer. Mg(2+) is required as a cofactor.

It is found in the cytoplasm. The enzyme catalyses shikimate + ATP = 3-phosphoshikimate + ADP + H(+). It participates in metabolic intermediate biosynthesis; chorismate biosynthesis; chorismate from D-erythrose 4-phosphate and phosphoenolpyruvate: step 5/7. In terms of biological role, catalyzes the specific phosphorylation of the 3-hydroxyl group of shikimic acid using ATP as a cosubstrate. The protein is Shikimate kinase of Bacteroides thetaiotaomicron (strain ATCC 29148 / DSM 2079 / JCM 5827 / CCUG 10774 / NCTC 10582 / VPI-5482 / E50).